The chain runs to 181 residues: Transcriptional repressor NrdR (181 aa).

A zinc finger spans residues C3–C34. The ATP-cone domain occupies I49–D139.

It belongs to the NrdR family. Zn(2+) serves as cofactor.

Negatively regulates transcription of bacterial ribonucleotide reductase nrd genes and operons by binding to NrdR-boxes. In Picosynechococcus sp. (strain ATCC 27264 / PCC 7002 / PR-6) (Agmenellum quadruplicatum), this protein is Transcriptional repressor NrdR.